Consider the following 198-residue polypeptide: dCTP deaminase (198 aa).

DCTP is bound by residues 110 to 115 (RSSLAR), Asp-128, 136 to 138 (VLE), Tyr-171, Lys-178, and Gln-182. Glu-138 acts as the Proton donor/acceptor in catalysis. The disordered stretch occupies residues 168–198 (ARPYNKREDAKYRDQKGAVASRISQDEKVNK). Basic and acidic residues predominate over residues 172–183 (NKREDAKYRDQK).

The protein belongs to the dCTP deaminase family. In terms of assembly, homotrimer.

It catalyses the reaction dCTP + H2O + H(+) = dUTP + NH4(+). The protein operates within pyrimidine metabolism; dUMP biosynthesis; dUMP from dCTP (dUTP route): step 1/2. Its function is as follows. Catalyzes the deamination of dCTP to dUTP. The protein is dCTP deaminase of Colwellia psychrerythraea (strain 34H / ATCC BAA-681) (Vibrio psychroerythus).